Here is a 221-residue protein sequence, read N- to C-terminus: Uracil-DNA glycosylase (221 aa).

Asp-64 functions as the Proton acceptor in the catalytic mechanism.

This sequence belongs to the uracil-DNA glycosylase (UDG) superfamily. UNG family.

It localises to the cytoplasm. The enzyme catalyses Hydrolyzes single-stranded DNA or mismatched double-stranded DNA and polynucleotides, releasing free uracil.. Excises uracil residues from the DNA which can arise as a result of misincorporation of dUMP residues by DNA polymerase or due to deamination of cytosine. This is Uracil-DNA glycosylase from Mycoplasmopsis pulmonis (strain UAB CTIP) (Mycoplasma pulmonis).